The following is a 159-amino-acid chain: Antitoxin Xre (159 aa).

It belongs to the MbcA/ParS/Xre antitoxin family. As to quaternary structure, homodimer. Forms a complex with cognate toxin Res; the 2 toxin molecules dimerize and each contacts an Xre homodimer. Most Res-Xre contacts are between the antitoxin molecule closest to the toxin.

Probable antitoxin component of a type II toxin-antitoxin (TA) system. In vivo probably neutralizes the toxic effect of cognate toxin Res. The sequence is that of Antitoxin Xre from Pseudomonas putida (strain ATCC 47054 / DSM 6125 / CFBP 8728 / NCIMB 11950 / KT2440).